Consider the following 31-residue polypeptide: U2-theraphotoxin-Hhn1a (31 aa).

Cystine bridges form between Cys-2/Cys-14, Cys-7/Cys-19, and Cys-13/Cys-26.

Expressed by the venom gland.

The protein localises to the secreted. Agglutinates erythrocytes. The protein is U2-theraphotoxin-Hhn1a of Cyriopagopus hainanus (Chinese bird spider).